A 49-amino-acid chain; its full sequence is Large ribosomal subunit protein bL33A (49 aa).

This sequence belongs to the bacterial ribosomal protein bL33 family.

This is Large ribosomal subunit protein bL33A from Bacillus pumilus (strain SAFR-032).